Here is a 570-residue protein sequence, read N- to C-terminus: Urease subunit alpha 1 (570 aa).

The 440-residue stretch at 131–570 (GGIDTHVHFI…VPMAQRYFLF (440 aa)) folds into the Urease domain. Ni(2+) contacts are provided by His136, His138, and Lys219. An N6-carboxylysine modification is found at Lys219. Residue His221 coordinates substrate. Residues His248 and His274 each coordinate Ni(2+). His322 serves as the catalytic Proton donor. Residue Asp362 participates in Ni(2+) binding.

Belongs to the metallo-dependent hydrolases superfamily. Urease alpha subunit family. As to quaternary structure, heterotrimer of UreA (gamma), UreB (beta) and UreC (alpha) subunits. Three heterotrimers associate to form the active enzyme. The cofactor is Ni cation. Post-translationally, carboxylation allows a single lysine to coordinate two nickel ions.

It localises to the cytoplasm. The enzyme catalyses urea + 2 H2O + H(+) = hydrogencarbonate + 2 NH4(+). Its pathway is nitrogen metabolism; urea degradation; CO(2) and NH(3) from urea (urease route): step 1/1. Its function is as follows. May protect brucellae during their passage through the stomach. The major route of infection in human brucellosis is oral. The polypeptide is Urease subunit alpha 1 (Brucella abortus (strain 2308)).